Consider the following 82-residue polypeptide: Penaeidin-3f (82 aa).

The signal sequence occupies residues 1–19; the sequence is MRLVACLVFLASFALVCQG. Glutamine 20 is subject to Pyrrolidone carboxylic acid. Disulfide bonds link cysteine 51–cysteine 66, cysteine 55–cysteine 73, and cysteine 67–cysteine 74. Position 81 is a serine amide (serine 81).

Belongs to the penaeidin family.

It is found in the cytoplasmic granule. Its function is as follows. Antibacterial and antifungal activity. Presents chitin-binding activity. The sequence is that of Penaeidin-3f from Penaeus vannamei (Whiteleg shrimp).